The primary structure comprises 192 residues: Fe/S biogenesis protein NfuA (192 aa).

Positions 149 and 152 each coordinate [4Fe-4S] cluster.

It belongs to the NfuA family. In terms of assembly, homodimer. [4Fe-4S] cluster is required as a cofactor.

Involved in iron-sulfur cluster biogenesis. Binds a 4Fe-4S cluster, can transfer this cluster to apoproteins, and thereby intervenes in the maturation of Fe/S proteins. Could also act as a scaffold/chaperone for damaged Fe/S proteins. The chain is Fe/S biogenesis protein NfuA from Shewanella denitrificans (strain OS217 / ATCC BAA-1090 / DSM 15013).